The sequence spans 381 residues: S-(hydroxymethyl)glutathione dehydrogenase (381 aa).

Cysteine 49 provides a ligand contact to Zn(2+). Histidine 50 provides a ligand contact to NAD(+). Residues histidine 71, glutamate 72, cysteine 101, cysteine 104, cysteine 107, cysteine 115, and cysteine 178 each coordinate Zn(2+). Residues 203–208 (GGGIVG), aspartate 227, and 298–300 (IGV) contribute to the NAD(+) site.

Belongs to the zinc-containing alcohol dehydrogenase family. Class-III subfamily. The cofactor is Zn(2+).

It catalyses the reaction a primary alcohol + NAD(+) = an aldehyde + NADH + H(+). The catalysed reaction is a secondary alcohol + NAD(+) = a ketone + NADH + H(+). The enzyme catalyses S-(hydroxymethyl)glutathione + NADP(+) = S-formylglutathione + NADPH + H(+). It carries out the reaction S-(hydroxymethyl)glutathione + NAD(+) = S-formylglutathione + NADH + H(+). It catalyses the reaction S-nitrosoglutathione + NADH + H(+) = S-(hydroxysulfenamide)glutathione + NAD(+). In terms of biological role, oxidizes long-chain alcohols and, in the presence of glutathione, is able to oxidize formaldehyde. Also acts as a S-nitroso-glutathione reductase by catalyzing the NADH-dependent reduction of S-nitrosoglutathione, thereby regulating protein S-nitrosylation. This Candida maltosa (Yeast) protein is S-(hydroxymethyl)glutathione dehydrogenase (FDH1).